The chain runs to 257 residues: Ig delta chain C region secreted form (257 aa).

The 101-residue stretch at 5–105 (PDMFLLSECK…WDSQSSKRVT (101 aa)) folds into the Ig-like 1 domain. Cysteines 26 and 78 form a disulfide. N-linked (GlcNAc...) asparagine glycosylation is found at Asn58 and Asn75. The tract at residues 89–111 (PFKFPESWDSQSSKRVTPTLQAK) is disordered. The segment covering 96–111 (WDSQSSKRVTPTLQAK) has biased composition (polar residues). Asn112, Asn135, and Asn227 each carry an N-linked (GlcNAc...) asparagine glycan. One can recognise an Ig-like 2 domain in the interval 133–233 (PSNLTVNILT…TKLNASKSLA (101 aa)).

Cell lines producing IgD contain several mRNA species for Ig delta chains. In plasmacytomas, the secreted form is the major component, and the membrane-bound form is a minor component. In spleen, however, the membrane-bound form is the major component. These two forms differ in their C-terminal segments.

The protein localises to the secreted. This is Ig delta chain C region secreted form from Mus musculus (Mouse).